A 201-amino-acid chain; its full sequence is 3-isopropylmalate dehydratase small subunit (201 aa).

The protein belongs to the LeuD family. LeuD type 1 subfamily. Heterodimer of LeuC and LeuD.

It catalyses the reaction (2R,3S)-3-isopropylmalate = (2S)-2-isopropylmalate. It participates in amino-acid biosynthesis; L-leucine biosynthesis; L-leucine from 3-methyl-2-oxobutanoate: step 2/4. Catalyzes the isomerization between 2-isopropylmalate and 3-isopropylmalate, via the formation of 2-isopropylmaleate. The chain is 3-isopropylmalate dehydratase small subunit from Nitrobacter hamburgensis (strain DSM 10229 / NCIMB 13809 / X14).